Consider the following 731-residue polypeptide: Wall-associated receptor kinase-like 5 (731 aa).

The N-terminal stretch at 1-26 (MKTKTYRFVCLVASVLTLQLMNGSSA) is a signal peptide. The Extracellular portion of the chain corresponds to 27–360 (ATPPPPPNSK…PAKPLVLQGV (334 aa)). N-linked (GlcNAc...) asparagine glycosylation is found at asparagine 37, asparagine 43, asparagine 73, asparagine 96, asparagine 124, asparagine 137, asparagine 236, and asparagine 272. Residues 285-342 (CLCEYGYFSEMSYRNCYCSLGFTGNPYLRGGCIDNDDCKGPNICEEGTCVNVPGGYRC) are atypical EGF-like. 3 disulfides stabilise this stretch: cysteine 287/cysteine 300, cysteine 322/cysteine 333, and cysteine 328/cysteine 342. Residues 361–381 (LLGLMGLLFLVVGTLGLIIFI) form a helical membrane-spanning segment. Residues 382–731 (KKRRRIISSR…EDQVMEISRE (350 aa)) lie on the Cytoplasmic side of the membrane. The Protein kinase domain occupies 432-705 (FSVKRVLGKG…REASLELERI (274 aa)). ATP is bound by residues 438-446 (LGKGSQGTV) and lysine 460. A Phosphotyrosine modification is found at tyrosine 505. The active-site Proton acceptor is aspartate 557. Threonine 591 and threonine 596 each carry phosphothreonine. At tyrosine 604 the chain carries Phosphotyrosine. Positions 709–731 (PEDLEAHIENDDEEDQVMEISRE) are disordered.

This sequence belongs to the protein kinase superfamily. Ser/Thr protein kinase family. In terms of tissue distribution, preferentially expressed in roots and flowers.

It localises to the membrane. The enzyme catalyses L-seryl-[protein] + ATP = O-phospho-L-seryl-[protein] + ADP + H(+). The catalysed reaction is L-threonyl-[protein] + ATP = O-phospho-L-threonyl-[protein] + ADP + H(+). In terms of biological role, serine/threonine-protein kinase that may function as a signaling receptor of extracellular matrix component. May be involved in plant's response to pathogen infection. The chain is Wall-associated receptor kinase-like 5 (WAKL5) from Arabidopsis thaliana (Mouse-ear cress).